Reading from the N-terminus, the 343-residue chain is 4-hydroxy-2-oxovalerate aldolase (343 aa).

Residues 4–254 enclose the Pyruvate carboxyltransferase domain; that stretch reads PRLTDTTLRD…NPGLDVFGLM (251 aa). 12 to 13 is a binding site for substrate; that stretch reads RD. D13 provides a ligand contact to Mn(2+). The Proton acceptor role is filled by H16. Residues S166 and H193 each contribute to the substrate site. Positions 193 and 195 each coordinate Mn(2+). Y284 provides a ligand contact to substrate.

This sequence belongs to the 4-hydroxy-2-oxovalerate aldolase family.

It catalyses the reaction (S)-4-hydroxy-2-oxopentanoate = acetaldehyde + pyruvate. The protein is 4-hydroxy-2-oxovalerate aldolase of Chloroflexus aggregans (strain MD-66 / DSM 9485).